Consider the following 462-residue polypeptide: ATP synthase subunit beta (462 aa).

151-158 (GGAGVGKT) provides a ligand contact to ATP.

This sequence belongs to the ATPase alpha/beta chains family. In terms of assembly, F-type ATPases have 2 components, CF(1) - the catalytic core - and CF(0) - the membrane proton channel. CF(1) has five subunits: alpha(3), beta(3), gamma(1), delta(1), epsilon(1). CF(0) has three main subunits: a(1), b(2) and c(9-12). The alpha and beta chains form an alternating ring which encloses part of the gamma chain. CF(1) is attached to CF(0) by a central stalk formed by the gamma and epsilon chains, while a peripheral stalk is formed by the delta and b chains.

It localises to the cell inner membrane. The enzyme catalyses ATP + H2O + 4 H(+)(in) = ADP + phosphate + 5 H(+)(out). Its function is as follows. Produces ATP from ADP in the presence of a proton gradient across the membrane. The catalytic sites are hosted primarily by the beta subunits. The protein is ATP synthase subunit beta of Chlorobaculum parvum (strain DSM 263 / NCIMB 8327) (Chlorobium vibrioforme subsp. thiosulfatophilum).